A 30-amino-acid chain; its full sequence is SEIPQPSLDFEQFSNMIQCTIPPGEECLAY.

As to quaternary structure, heterotrimer of alpha, beta, and gamma chains; non-covalently linked. Glycosylated. As to expression, expressed by the venom gland.

The protein resides in the secreted. Heterotrimer: Snake venom phospholipase A2 (PLA2) heterotrimer that acts as a potent presynaptic neurotoxin by blocking synaptic transmission and synaptic vesicle recycling. Enzymatic activity is essential for the neurotoxic effects. May act by binding in a calcium-dependent fashion to neurotonal pentraxin-1 (NPTX1) and neurotonal pentraxin-2 (NPTX2), but not to neuronal pentraxin receptor (NPTXR). Also binds to taipoxin-associated calcium binding protein 49 (RCN2), a protein localized in the lumen of endoplasmic reticulum. In terms of biological role, monomer (gamma chain): Snake venom phospholipase A2 homolog that is neither toxic nor enzymatically active. Does not bind calcium. This Oxyuranus scutellatus canni (Papuan taipan) protein is Acidic phospholipase A2 homolog cannitoxin gamma chain.